A 36-amino-acid chain; its full sequence is Potassium channel toxin alpha-KTx 2.7 (36 aa).

Intrachain disulfides connect cysteine 7–cysteine 29, cysteine 13–cysteine 34, and cysteine 17–cysteine 36.

It belongs to the short scorpion toxin superfamily. Potassium channel inhibitor family. Alpha-KTx 02 subfamily. As to expression, expressed by the venom gland.

The protein resides in the secreted. Its function is as follows. Inhibitor of voltage-gated potassium channels (Kv). This protein is capable of displacing the binding of radio-labeled noxiustoxin (AC P08815) to rat brain synaptosomes with high affinity (about 100 pM). It is also capable of inhibiting transient potassium-currents (resembling I(A)-type currents), in cultured rat cerebellar granule cells. About 50% of the peak currents are reduced by application of a 1.5 uM solution of this toxin. Is lethal to mice (when less than 100 ug are injected). In Centruroides limpidus (Mexican scorpion), this protein is Potassium channel toxin alpha-KTx 2.7.